Consider the following 402-residue polypeptide: CD2 homolog (402 aa).

A signal peptide spans 1 to 16; it reads MIIIVIFLMCLKIVLN. At 17-204 the chain is on the extracellular side; it reads NIIIWSTLNQ…ILKYQNYLST (188 aa). Residues N25, N37, N52, N55, N72, N77, N81, N89, N95, N108, N125, N137, N148, N153, N169, N177, N184, and N190 are each glycosylated (N-linked (GlcNAc...) asparagine; by host). Cystine bridges form between C126-C191 and C133-C174. The helical transmembrane segment at 205–225 threads the bilayer; that stretch reads LFYIIIFIVSGLIIGIFISII. The Cytoplasmic segment spans residues 226–402; the sequence is SVLSIRRKRK…ISLIHVDRII (177 aa). Residues 238 to 276 form a disordered region; it reads VEEIESPPPSESNEEDISHDDTTSIHEPSPREPLLPKPY. The segment covering 256–267 has biased composition (basic and acidic residues); it reads HDDTTSIHEPSP. 11 repeat units span residues 302–307, 308–313, 314–319, 320–325, 326–331, 332–337, 338–343, 344–349, 350–355, 356–361, and 362–367. The segment at 302 to 367 is 11 X 6 AA tandem repeats of K-P-C-[PRS]-[P]-[PS]; it reads KPCPPPKPCP…CPPSKPCPSP (66 aa). Residues 319 to 386 show a composition bias toward pro residues; sequence PKPCPPPKPC…PSIPLLPNIP (68 aa). The segment at 319-388 is disordered; it reads PKPCPPPKPC…IPLLPNIPPL (70 aa).

The protein belongs to the asfivirus CD2 homolog protein family. Both glycosylated and nonglycosylated forms interact (via C-terminus) with the host AP-1 complex. In terms of processing, cleaved into two fragments of 63 kDa and 26 kDa containing respectively the glycosylated N-terminus and the nonglycosylated C-terminus. A full-length 89-kDa glycosylated form also exists.

It is found in the host cell membrane. The protein localises to the virion membrane. It localises to the host Golgi apparatus. Functionally, may play an immunosuppressive role by inhibiting lymphocyte proliferation and subsequently facilitating viral replication and generalization of infection. Responsible for viral hemadsorption, which may help viral spread. Increases virus replication in the tick vector at the step of virus uptake or replication in the tick gut. May play a role in the host Golgi reorganization to yield viral factories. May play a role in host cell penetration. In Ornithodoros (relapsing fever ticks), this protein is CD2 homolog.